Here is a 625-residue protein sequence, read N- to C-terminus: Phosphomethylpyrimidine synthase (625 aa).

Residues N231, M260, Y289, H325, 345 to 347 (SRG), 386 to 389 (DGLR), and E425 contribute to the substrate site. Position 429 (H429) interacts with Zn(2+). Y452 lines the substrate pocket. H493 is a binding site for Zn(2+). 3 residues coordinate [4Fe-4S] cluster: C573, C576, and C581.

Belongs to the ThiC family. Homodimer. It depends on [4Fe-4S] cluster as a cofactor.

It carries out the reaction 5-amino-1-(5-phospho-beta-D-ribosyl)imidazole + S-adenosyl-L-methionine = 4-amino-2-methyl-5-(phosphooxymethyl)pyrimidine + CO + 5'-deoxyadenosine + formate + L-methionine + 3 H(+). Its pathway is cofactor biosynthesis; thiamine diphosphate biosynthesis. Catalyzes the synthesis of the hydroxymethylpyrimidine phosphate (HMP-P) moiety of thiamine from aminoimidazole ribotide (AIR) in a radical S-adenosyl-L-methionine (SAM)-dependent reaction. This is Phosphomethylpyrimidine synthase from Acinetobacter baumannii (strain AB0057).